A 203-amino-acid polypeptide reads, in one-letter code: RNA annealing protein YRA2 (203 aa).

Met1 carries the post-translational modification N-acetylmethionine. 2 disordered regions span residues 1–60 (MDKA…REEP) and 134–203 (EIYQ…YMKG). Residues 11–20 (NSHTDSSSNH) show a composition bias toward polar residues. A compositionally biased stretch (basic and acidic residues) spans 47-60 (SRSKDRLYREREEP). The 75-residue stretch at 64–138 (KRIRISKIPL…AKIEVEIYQP (75 aa)) folds into the RRM domain. Composition is skewed to basic residues over residues 139–153 (QRKH…RRKQ) and 163–180 (PGSH…KNKG).

This sequence belongs to the YRA1 family. In terms of assembly, associates with mRNPs. Interacts with YRA1.

The protein localises to the nucleus. Involved in export of poly(A) mRNAs from the nucleus. Recruited to the coding sequences as well as poly-A sites of active genes. The chain is RNA annealing protein YRA2 (YRA2) from Saccharomyces cerevisiae (strain RM11-1a) (Baker's yeast).